The following is a 552-amino-acid chain: Protoheme IX farnesyltransferase, mitochondrial (552 aa).

Positions 118-185 (AADIPPSTST…PSGEIPPDAS (68 aa)) are disordered. Positions 150 to 168 (EQAASASSNAPSEAAQTTP) are enriched in low complexity. 8 helical membrane-spanning segments follow: residues 215–235 (LTMLVVLSAMVPYALYPVPDF), 245–267 (LSPLTLLFLTTGTTLCSAAANAL), 296–316 (AAVCFALFCATTGILALQFGV), 318–338 (PTVAFLGAANIVLYAGIYTPL), 346–366 (TWVGAVVGGIPPLMGWAAAAG), 387–407 (AGGWLFAALLFTWQFPHFMAL), 441–461 (VFVPLCVGLCAVGVTEWSFAV), and 487–507 (ARGLFWASVWHLPVVMVLALL).

It belongs to the UbiA prenyltransferase family.

The protein resides in the mitochondrion membrane. It catalyses the reaction heme b + (2E,6E)-farnesyl diphosphate + H2O = Fe(II)-heme o + diphosphate. Converts protoheme IX and farnesyl diphosphate to heme O. In Pyricularia oryzae (strain 70-15 / ATCC MYA-4617 / FGSC 8958) (Rice blast fungus), this protein is Protoheme IX farnesyltransferase, mitochondrial (COX10).